A 295-amino-acid polypeptide reads, in one-letter code: GTPase Era (295 aa).

The Era-type G domain maps to 5 to 172 (YCGYAAIIGR…EQAVHQLMPE (168 aa)). Residues 13–20 (GRPNVGKS) form a G1 region. Position 13-20 (13-20 (GRPNVGKS)) interacts with GTP. Residues 39 to 43 (QTTRY) form a G2 region. The segment at 60 to 63 (DTPG) is G3. GTP-binding positions include 60–64 (DTPGL) and 121–124 (NKVD). A G4 region spans residues 121–124 (NKVD). The tract at residues 151 to 153 (LSA) is G5. Positions 203–279 (LGQEIPYSLA…FLQLWVKVKS (77 aa)) constitute a KH type-2 domain.

It belongs to the TRAFAC class TrmE-Era-EngA-EngB-Septin-like GTPase superfamily. Era GTPase family. In terms of assembly, monomer.

The protein resides in the cytoplasm. The protein localises to the cell inner membrane. Its function is as follows. An essential GTPase that binds both GDP and GTP, with rapid nucleotide exchange. Plays a role in 16S rRNA processing and 30S ribosomal subunit biogenesis and possibly also in cell cycle regulation and energy metabolism. The chain is GTPase Era from Coxiella burnetii (strain CbuK_Q154) (Coxiella burnetii (strain Q154)).